We begin with the raw amino-acid sequence, 117 residues long: uncharacterized protein (117 aa).

Residues 1-38 (MIIDSSRIPSFTQLHSTMTRAPLLLLCVALVLLGHVNG) form the signal peptide.

Its subcellular location is the secreted. This is an uncharacterized protein from Homo sapiens (Human).